Here is a 769-residue protein sequence, read N- to C-terminus: Calcium up-regulated protein B (769 aa).

A disordered region spans residues 1–22 (MINIEDISKSSNQSEEKQLKST). Ricin B-type lectin domains are found at residues 25–145 (KPKY…WTTF) and 158–296 (FQSK…WITN).

The protein belongs to the cup family.

It localises to the cytoplasm. It is found in the membrane. In terms of biological role, may play an important role in stabilizing and/or regulating the cell membrane during Ca(2+) stress or certain stages of development. The chain is Calcium up-regulated protein B (cupB) from Dictyostelium discoideum (Social amoeba).